Here is a 141-residue protein sequence, read N- to C-terminus: Nucleoside triphosphatase NudI (141 aa).

A Nudix hydrolase domain is found at 1 to 141 (MRQRTIVCPL…RKTLSLKGLL (141 aa)). The Nudix box motif lies at 38 to 59 (GGVEPGERIEDALRREIREELG).

It belongs to the Nudix hydrolase family. NudI subfamily. As to quaternary structure, monomer. Requires Mg(2+) as cofactor.

It catalyses the reaction a ribonucleoside 5'-triphosphate + H2O = a ribonucleoside 5'-phosphate + diphosphate + H(+). It carries out the reaction a 2'-deoxyribonucleoside 5'-triphosphate + H2O = a 2'-deoxyribonucleoside 5'-phosphate + diphosphate + H(+). The enzyme catalyses dUTP + H2O = dUMP + diphosphate + H(+). The catalysed reaction is dTTP + H2O = dTMP + diphosphate + H(+). It catalyses the reaction dCTP + H2O = dCMP + diphosphate + H(+). In terms of biological role, catalyzes the hydrolysis of nucleoside triphosphates, with a preference for pyrimidine deoxynucleoside triphosphates (dUTP, dTTP and dCTP). This is Nucleoside triphosphatase NudI from Escherichia fergusonii (strain ATCC 35469 / DSM 13698 / CCUG 18766 / IAM 14443 / JCM 21226 / LMG 7866 / NBRC 102419 / NCTC 12128 / CDC 0568-73).